We begin with the raw amino-acid sequence, 166 residues long: Large ribosomal subunit protein uL10 (166 aa).

This sequence belongs to the universal ribosomal protein uL10 family. As to quaternary structure, part of the ribosomal stalk of the 50S ribosomal subunit. The N-terminus interacts with L11 and the large rRNA to form the base of the stalk. The C-terminus forms an elongated spine to which L12 dimers bind in a sequential fashion forming a multimeric L10(L12)X complex.

Functionally, forms part of the ribosomal stalk, playing a central role in the interaction of the ribosome with GTP-bound translation factors. This chain is Large ribosomal subunit protein uL10, found in Enterococcus faecalis (strain ATCC 700802 / V583).